A 426-amino-acid polypeptide reads, in one-letter code: Glutamate-1-semialdehyde 2,1-aminomutase (426 aa).

An N6-(pyridoxal phosphate)lysine modification is found at Lys265.

It belongs to the class-III pyridoxal-phosphate-dependent aminotransferase family. HemL subfamily. As to quaternary structure, homodimer. Pyridoxal 5'-phosphate is required as a cofactor.

The protein localises to the cytoplasm. The enzyme catalyses (S)-4-amino-5-oxopentanoate = 5-aminolevulinate. It participates in porphyrin-containing compound metabolism; protoporphyrin-IX biosynthesis; 5-aminolevulinate from L-glutamyl-tRNA(Glu): step 2/2. This is Glutamate-1-semialdehyde 2,1-aminomutase from Salmonella schwarzengrund (strain CVM19633).